The following is a 568-amino-acid chain: Nucleolar protein 58 (568 aa).

A Nop domain is found at 293-417; that stretch reads IAPNLTALVG…LESRLRALEH (125 aa). The disordered stretch occupies residues 430–568; that stretch reads ANGQQGRQQP…KKKKKKKKDE (139 aa). Positions 471–482 are enriched in basic and acidic residues; it reads EEVKEEKDEKKD. Residues 522-533 show a composition bias toward basic residues; sequence RKEAKKAAKAAK. A compositionally biased stretch (basic and acidic residues) spans 534–544; sequence KAAEESGDGDK.

The protein belongs to the NOP5/NOP56 family.

It is found in the nucleus. It localises to the nucleolus. In terms of biological role, required for pre-18S rRNA processing. May bind microtubules. This Cryptococcus neoformans var. neoformans serotype D (strain JEC21 / ATCC MYA-565) (Filobasidiella neoformans) protein is Nucleolar protein 58 (NOP58).